The chain runs to 332 residues: MSTPEVVREVQSLETYNPLAKQKAAAKLSRIPVKVVQGEILKKPDWIRVKAGSPSTRFYEIKQILRENKLNTVCEEASCPNIGECFGKGTATFMIMGDKCTRRCPFCDVGHGRPDPLDADEPLNLARTIAALKLKYVVITSVDRDDLRDGGSGHFVECIQRIRELSPGTTIEVLVPDFRGRDDRALEILKTSPPDVMNHNLETAPRLYKEARPGSDYQFSLNLLKKFKALHPDVPTKSGIMVGLGETDEEILQVMQDMRDHGINMLTIGQYLAPSTSHLPVRRYVHPDTFKMFEEKAYEMGFSHAAVGAMVRSSYHADQQAHAAGVSDKPAE.

7 residues coordinate [4Fe-4S] cluster: Cys-74, Cys-79, Cys-85, Cys-100, Cys-104, Cys-107, and Ser-314. The 219-residue stretch at Cys-85–Ser-303 folds into the Radical SAM core domain.

It belongs to the radical SAM superfamily. Lipoyl synthase family. [4Fe-4S] cluster serves as cofactor.

It localises to the cytoplasm. The catalysed reaction is [[Fe-S] cluster scaffold protein carrying a second [4Fe-4S](2+) cluster] + N(6)-octanoyl-L-lysyl-[protein] + 2 oxidized [2Fe-2S]-[ferredoxin] + 2 S-adenosyl-L-methionine + 4 H(+) = [[Fe-S] cluster scaffold protein] + N(6)-[(R)-dihydrolipoyl]-L-lysyl-[protein] + 4 Fe(3+) + 2 hydrogen sulfide + 2 5'-deoxyadenosine + 2 L-methionine + 2 reduced [2Fe-2S]-[ferredoxin]. Its pathway is protein modification; protein lipoylation via endogenous pathway; protein N(6)-(lipoyl)lysine from octanoyl-[acyl-carrier-protein]: step 2/2. Catalyzes the radical-mediated insertion of two sulfur atoms into the C-6 and C-8 positions of the octanoyl moiety bound to the lipoyl domains of lipoate-dependent enzymes, thereby converting the octanoylated domains into lipoylated derivatives. This Polaromonas naphthalenivorans (strain CJ2) protein is Lipoyl synthase.